The following is an 89-amino-acid chain: MAITQERKTQLISEFKTHESDTGSPEVQIAVLTESINNLNEHLRTHKKDHHSRRGLLKMVGRRRNLLTYLRNKDVTRYRELINKLGLRR.

Belongs to the universal ribosomal protein uS15 family. In terms of assembly, part of the 30S ribosomal subunit. Forms a bridge to the 50S subunit in the 70S ribosome, contacting the 23S rRNA.

Its function is as follows. One of the primary rRNA binding proteins, it binds directly to 16S rRNA where it helps nucleate assembly of the platform of the 30S subunit by binding and bridging several RNA helices of the 16S rRNA. Forms an intersubunit bridge (bridge B4) with the 23S rRNA of the 50S subunit in the ribosome. The sequence is that of Small ribosomal subunit protein uS15 from Bacillus pumilus (strain SAFR-032).